We begin with the raw amino-acid sequence, 24 residues long: Major pollen allergen Ole e 4 (24 aa).

This sequence belongs to the glycosyl hydrolase 17 family. Post-translationally, the N-terminus is blocked.

The protein is Major pollen allergen Ole e 4 of Olea europaea (Common olive).